A 1031-amino-acid polypeptide reads, in one-letter code: Sister chromatid cohesion 1 protein 4 (1031 aa).

Residues 461–481 (TPDKEDPGTCNDDAGNNNITG) form a disordered region. The Nuclear localization signal signature appears at 545–552 (TKRLRSAP). Disordered regions lie at residues 661 to 703 (VEEN…EELK), 742 to 772 (EKLDRVEDLQVEESHENHDGEGGQDVCADPN), and 803 to 835 (ELPHEDEKTDASAEVSELGRDDQTPCDNTVGST). Composition is skewed to basic and acidic residues over residues 742-762 (EKLDRVEDLQVEESHENHDGE) and 803-825 (ELPHEDEKTDASAEVSELGRDDQ).

This sequence belongs to the rad21 family. In terms of assembly, component of the cohesin complex. As to expression, expressed in tissues containing dividing cells such as seedlings, flower buds, flowers and inflorescence meristem tissue.

It localises to the nucleus. The protein localises to the chromosome. The protein resides in the centromere. Functionally, involved in sister chromatid and centromere cohesion during mitosis. The chain is Sister chromatid cohesion 1 protein 4 (SYN4) from Arabidopsis thaliana (Mouse-ear cress).